A 462-amino-acid chain; its full sequence is Glutamate--tRNA ligase 1 (462 aa).

Positions 8–18 (PSPTGYLHIGG) match the 'HIGH' region motif. A 'KMSKS' region motif is present at residues 237 to 241 (KLSKR). Lys-240 provides a ligand contact to ATP.

This sequence belongs to the class-I aminoacyl-tRNA synthetase family. Glutamate--tRNA ligase type 1 subfamily. As to quaternary structure, monomer.

It is found in the cytoplasm. The enzyme catalyses tRNA(Glu) + L-glutamate + ATP = L-glutamyl-tRNA(Glu) + AMP + diphosphate. In terms of biological role, catalyzes the attachment of glutamate to tRNA(Glu) in a two-step reaction: glutamate is first activated by ATP to form Glu-AMP and then transferred to the acceptor end of tRNA(Glu). In Sulfurimonas denitrificans (strain ATCC 33889 / DSM 1251) (Thiomicrospira denitrificans (strain ATCC 33889 / DSM 1251)), this protein is Glutamate--tRNA ligase 1.